Consider the following 112-residue polypeptide: Keratin-associated protein 12-4 (112 aa).

Tandem repeats lie at residues 10-14 (CPMAC), 20-24 (CVPST), 25-29 (CYPPE), 35-39 (CCCSA), 41-45 (CVALL), 46-50 (CRPLC), 56-60 (CQPAC), 61-65 (CVPSP), 66-70 (CQVAC), 71-75 (CVPVS), 76-80 (CKPVL), 81-85 (CVASF), 86-90 (CPTSG), 91-95 (CCQPF), and 96-100 (CPTLV). Positions 10 to 100 (CPMACPGSPC…CCQPFCPTLV (91 aa)) are 15 X 5 AA approximate repeats.

Belongs to the KRTAP type 12 family. In terms of assembly, interacts with hair keratins. Restricted to a narrow region of the hair fiber cuticle, lying approximately 20 cell layers above the apex of the dermal papilla of the hair root; not detected in any other tissues.

Functionally, in the hair cortex, hair keratin intermediate filaments are embedded in an interfilamentous matrix, consisting of hair keratin-associated proteins (KRTAP), which are essential for the formation of a rigid and resistant hair shaft through their extensive disulfide bond cross-linking with abundant cysteine residues of hair keratins. The matrix proteins include the high-sulfur and high-glycine-tyrosine keratins. The polypeptide is Keratin-associated protein 12-4 (KRTAP12-4) (Homo sapiens (Human)).